Here is a 145-residue protein sequence, read N- to C-terminus: Cell division protein SepF (145 aa).

It belongs to the SepF family. As to quaternary structure, homodimer. Interacts with FtsZ.

It localises to the cytoplasm. Functionally, cell division protein that is part of the divisome complex and is recruited early to the Z-ring. Probably stimulates Z-ring formation, perhaps through the cross-linking of FtsZ protofilaments. Its function overlaps with FtsA. The protein is Cell division protein SepF of Lactobacillus acidophilus (strain ATCC 700396 / NCK56 / N2 / NCFM).